The chain runs to 1491 residues: Neurexin-1a (1491 aa).

Residues 1-27 form the signal peptide; the sequence is MSFSMRNGAHLIWIGLLVCCLVDMGAS. The region spanning 28 to 208 is the Laminin G-like 1 domain; the sequence is MEFTGAEGQW…SDICEADHIC (181 aa). Topologically, residues 28 to 1415 are extracellular; it reads MEFTGAEGQW…EVIRESSSTT (1388 aa). The region spanning 198 to 236 is the EGF-like 1 domain; that stretch reads NSDICEADHICLNGGVCSIVNDEPICDCSETGFQGKDCS. Intrachain disulfides connect cysteine 202-cysteine 214, cysteine 208-cysteine 223, and cysteine 225-cysteine 235. Laminin G-like domains follow at residues 263 to 460 and 467 to 661; these read MATF…AFKC and DPVT…KPSC. Residues aspartate 309, leucine 326, and methionine 394 each contribute to the Ca(2+) site. Cystine bridges form between cysteine 424/cysteine 460, cysteine 632/cysteine 661, cysteine 669/cysteine 680, cysteine 674/cysteine 689, and cysteine 691/cysteine 701. Residues 665–702 enclose the EGF-like 2 domain; it reads PPKQCLSNPCLNSGTCREGWNRYVCDCSGTGYLGRSCE. Laminin G-like domains follow at residues 707–880 and 894–1069; these read ILSY…IDYC and DPVT…ERGC. Intrachain disulfides connect cysteine 1041/cysteine 1069, cysteine 1076/cysteine 1087, cysteine 1081/cysteine 1096, and cysteine 1098/cysteine 1108. The 38-residue stretch at 1072–1109 folds into the EGF-like 3 domain; that stretch reads PSTTCQEDSCSNQGVCLQQWEGFSCDCSMTSYGGPLCN. The Laminin G-like 6 domain occupies 1113–1314; sequence TTYIFGRDGG…DPNVRVEGSA (202 aa). The tract at residues 1318–1408 is disordered; that stretch reads GDMPSSSITP…AKGYPSPEVI (91 aa). The span at 1322–1353 shows a compositional bias: low complexity; the sequence is SSSITPQSSVSAAGNRSETSPSITDITTTTAS. Residues 1354–1364 are compositionally biased toward polar residues; sequence NRQGKQTTTPQ. Residues 1416-1436 form a helical membrane-spanning segment; sequence GMVVGIVAAAALCILILLYAM. Over 1437 to 1491 the chain is Cytoplasmic; the sequence is YKYRNRDEGSYHVDESRNYISNSATQPNGAAVKEKPIGVPKNKKDKKNKDKEYYV. The tract at residues 1457 to 1491 is disordered; sequence SNSATQPNGAAVKEKPIGVPKNKKDKKNKDKEYYV.

The protein belongs to the neurexin family.

It localises to the membrane. Functionally, neuronal cell surface protein that may be involved in cell recognition and cell adhesion. This chain is Neurexin-1a (nrxn1a), found in Danio rerio (Zebrafish).